The chain runs to 892 residues: Leucine--tRNA ligase (892 aa).

The 'HIGH' region motif lies at 42-52 (PYPSGKLHMGH). Positions 640–644 (TMSKS) match the 'KMSKS' region motif. Lys-643 is a binding site for ATP.

Belongs to the class-I aminoacyl-tRNA synthetase family.

It is found in the cytoplasm. The catalysed reaction is tRNA(Leu) + L-leucine + ATP = L-leucyl-tRNA(Leu) + AMP + diphosphate. The polypeptide is Leucine--tRNA ligase (Albidiferax ferrireducens (strain ATCC BAA-621 / DSM 15236 / T118) (Rhodoferax ferrireducens)).